The following is a 412-amino-acid chain: AA9 family lytic polysaccharide monooxygenase A (412 aa).

A signal peptide spans Met-1–Ala-20. Cu(2+) is bound by residues His-21 and His-103. Residues Cys-63 and Cys-186 are joined by a disulfide bond. N-linked (GlcNAc...) asparagine glycosylation is present at Asn-151. An O2-binding site is contributed by His-172. Position 183 (Tyr-183) interacts with Cu(2+). N-linked (GlcNAc...) asparagine glycans are attached at residues Asn-334 and Asn-385. Residues Gly-373–Val-409 form the CBM1 domain.

This sequence belongs to the polysaccharide monooxygenase AA9 family. The cofactor is Cu(2+).

The protein localises to the secreted. The catalysed reaction is [(1-&gt;4)-beta-D-glucosyl]n+m + reduced acceptor + O2 = 4-dehydro-beta-D-glucosyl-[(1-&gt;4)-beta-D-glucosyl]n-1 + [(1-&gt;4)-beta-D-glucosyl]m + acceptor + H2O.. Lytic polysaccharide monooxygenase (LPMO) that depolymerizes crystalline and amorphous polysaccharides via the oxidation of scissile alpha- or beta-(1-4)-glycosidic bonds, yielding C4 oxidation products. Catalysis by LPMOs requires the reduction of the active-site copper from Cu(II) to Cu(I) by a reducing agent and H(2)O(2) or O(2) as a cosubstrate. This is AA9 family lytic polysaccharide monooxygenase A (eglD) from Aspergillus niger (strain ATCC MYA-4892 / CBS 513.88 / FGSC A1513).